The primary structure comprises 237 residues: Probable transcriptional regulatory protein MCAP_0598 (237 aa).

Belongs to the TACO1 family.

It is found in the cytoplasm. The polypeptide is Probable transcriptional regulatory protein MCAP_0598 (Mycoplasma capricolum subsp. capricolum (strain California kid / ATCC 27343 / NCTC 10154)).